The following is a 234-amino-acid chain: Transcription factor ILR3 (234 aa).

The interval 34–85 (QPIGVSSNSSAGVDGSAGNSEASKEPGSKKRGRCESSSATSSKACREKQRRD) is disordered. The segment covering 36 to 54 (IGVSSNSSAGVDGSAGNSE) has biased composition (polar residues). One can recognise a bHLH domain in the interval 71–122 (SATSSKACREKQRRDRLNDKFMELGAILEPGNPPKTDKAAILVDAVRMVTQL).

As to quaternary structure, homodimer. Interacts with BTS and BHLH47/PYE. In terms of tissue distribution, widely expressed throughout development, mostly in vasculatures.

The protein localises to the nucleus. Transcription factor. Plays a role in resistance to amide-linked indole-3-acetic acid (IAA) conjugates such as IAA-Leu and IAA-Phe. May regulate gene expression in response to metal homeostasis changes. The polypeptide is Transcription factor ILR3 (ILR3) (Arabidopsis thaliana (Mouse-ear cress)).